Here is a 120-residue protein sequence, read N- to C-terminus: Myohemerythrin (120 aa).

Fe cation contacts are provided by His-26, His-56, Glu-60, His-75, His-79, His-108, and Asp-113.

Belongs to the hemerythrin family. As to quaternary structure, monomer.

It localises to the cytoplasm. Functionally, myohemerythrin is an oxygen-binding protein found in the retractor muscles of certain worms. The oxygen-binding site contains two iron atoms. This is Myohemerythrin from Theromyzon tessulatum (Duck leech).